The chain runs to 756 residues: Inhibitor of nuclear factor kappa-B kinase subunit beta (756 aa).

Residues Trp-15–Phe-300 form the Protein kinase domain. ATP-binding positions include Leu-21 to Val-29 and Lys-44. The active-site Proton acceptor is Asp-145. Lys-163 is covalently cross-linked (Glycyl lysine isopeptide (Lys-Gly) (interchain with G-Cter in ubiquitin)). Position 177 is a phosphoserine; by TBK1 and PKC/PRKCZ (Ser-177). Residue Cys-179 is modified to S-nitrosocysteine. Ser-181 carries the phosphoserine; by TBK1, PKC/PRKCZ and PDPK1 modification. Pro-191 carries the hydroxyproline modification. The leucine-zipper stretch occupies residues Leu-458–Leu-479. 9 positions are modified to phosphoserine; by autocatalysis: Ser-670, Ser-672, Ser-675, Ser-682, Ser-689, Ser-697, Ser-705, Ser-733, and Ser-740. An NEMO-binding region spans residues Leu-737–Leu-742.

Belongs to the protein kinase superfamily. Ser/Thr protein kinase family. I-kappa-B kinase subfamily. As to quaternary structure, component of the I-kappa-B-kinase (IKK) core complex consisting of CHUK, IKBKB and IKBKG; probably four alpha/CHUK-beta/IKBKB dimers are associated with four gamma/IKBKG subunits. The IKK core complex seems to associate with regulatory or adapter proteins to form a IKK-signalosome holo-complex. The IKK complex associates with TERF2IP/RAP1, leading to promote IKK-mediated phosphorylation of RELA/p65. Part of a complex composed of NCOA2, NCOA3, CHUK/IKKA, IKBKB, IKBKG and CREBBP. Part of a 70-90 kDa complex at least consisting of CHUK/IKKA, IKBKB, NFKBIA, RELA, ELP1 and MAP3K14. Found in a membrane raft complex, at least composed of BCL10, CARD11, DPP4 and IKBKB. Interacts with SQSTM1 through PRKCZ or PRKCI. Forms an NGF-induced complex with IKBKB, PRKCI and TRAF6. May interact with MAVS/IPS1. Interacts with NALP2. Interacts with TICAM1. Interacts with FAF1; the interaction disrupts the IKK complex formation. Interacts with ATM. Part of a ternary complex consisting of TANK, IKBKB and IKBKG. Interacts with NIBP; the interaction is direct. Interacts with ARRB1 and ARRB2. Interacts with TRIM21. Interacts with NLRC5; prevents IKBKB phosphorylation and kinase activity. Interacts with PDPK1. Interacts with EIF2AK2/PKR. The phosphorylated form interacts with PPM1A and PPM1B. Interacts with ZNF268; the interaction is further increased in a TNF-alpha-dependent manner. Interacts with IKBKE. Interacts with ZC3H12A. Interacts with AKAP13. Interacts with IFIT5; the interaction synergizes the recruitment of IKK to MAP3K7 and enhances IKK phosphorylation. Interacts with LRRC14; disrupts IKBKB-IKBKG interaction preventing I-kappa-B-kinase (IKK) core complex formation and leading to a decrease of IKBKB phosphorylation and NF-kappaB activation. Interacts with SASH1. Interacts with ARFIP2. Interacts with FKBP5. Post-translationally, upon cytokine stimulation, phosphorylated on Ser-177 and Ser-181 by MEKK1 and/or MAP3K14/NIK as well as TBK1 and PRKCZ; which enhances activity. Phosphorylated by MAP3K7/TAK1 in response to NOD1 and NOD2 signaling, promoting activation and phosphorylation of NF-kappa-B inhibitors, leading to NF-kappa-B activation. Once activated, autophosphorylates on the C-terminal serine cluster; which decreases activity and prevents prolonged activation of the inflammatory response. Phosphorylated by the IKK-related kinases TBK1 and IKBKE, which is associated with reduced CHUK/IKKA and IKBKB activity and NF-kappa-B-dependent gene transcription. Dephosphorylated at Ser-177 and Ser-181 by PPM1A and PPM1B. Ubiquitinated. Monoubiquitination involves TRIM21 that leads to inhibition of Tax-induced NF-kappa-B signaling. 'Ser-163' may not serve as a monoubiquitination site. Ubiquitination on 'Ser-163' may modulate phosphorylation on C-terminal serine residues. In terms of processing, hydroxylated by PHD1/EGLN2, loss of hydroxylation under hypoxic conditions results in activation of NF-kappa-B.

The protein localises to the cytoplasm. It is found in the nucleus. It localises to the membrane raft. It catalyses the reaction L-seryl-[I-kappa-B protein] + ATP = O-phospho-L-seryl-[I-kappa-B protein] + ADP + H(+). It carries out the reaction L-seryl-[protein] + ATP = O-phospho-L-seryl-[protein] + ADP + H(+). The catalysed reaction is L-threonyl-[protein] + ATP = O-phospho-L-threonyl-[protein] + ADP + H(+). In terms of biological role, serine kinase that plays an essential role in the NF-kappa-B signaling pathway which is activated by multiple stimuli such as inflammatory cytokines, bacterial or viral products, DNA damages or other cellular stresses. Acts as a part of the canonical IKK complex in the conventional pathway of NF-kappa-B activation. Phosphorylates inhibitors of NF-kappa-B on 2 critical serine residues. These modifications allow polyubiquitination of the inhibitors and subsequent degradation by the proteasome. In turn, free NF-kappa-B is translocated into the nucleus and activates the transcription of hundreds of genes involved in immune response, growth control, or protection against apoptosis. In addition to the NF-kappa-B inhibitors, phosphorylates several other components of the signaling pathway including NEMO/IKBKG, NF-kappa-B subunits RELA and NFKB1, as well as IKK-related kinases TBK1 and IKBKE. IKK-related kinase phosphorylations may prevent the overproduction of inflammatory mediators since they exert a negative regulation on canonical IKKs. Phosphorylates FOXO3, mediating the TNF-dependent inactivation of this pro-apoptotic transcription factor. Also phosphorylates other substrates including NAA10, NCOA3, BCL10 and IRS1. Phosphorylates RIPK1 at 'Ser-25' which represses its kinase activity and consequently prevents TNF-mediated RIPK1-dependent cell death. Phosphorylates the C-terminus of IRF5, stimulating IRF5 homodimerization and translocation into the nucleus. This chain is Inhibitor of nuclear factor kappa-B kinase subunit beta (IKBKB), found in Bos taurus (Bovine).